A 565-amino-acid polypeptide reads, in one-letter code: Zinc finger protein 143 (565 aa).

C2H2-type zinc fingers lie at residues 230-254 (FRCD…ERSH), 260-284 (YQCD…VRTH), 290-314 (YRCS…VRTH), 320-344 (FKCP…IRTH), 350-374 (YYCS…VRIH), 380-404 (YVCT…HVVH), and 410-433 (YNCN…RTAH).

It belongs to the GLI C2H2-type zinc-finger protein family.

The protein resides in the nucleus. Transcriptional activator. Activates the gene for selenocysteine tRNA (tRNAsec). Binds to the activator element (AE) motif of the selenocysteine tRNA gene promoter. In Xenopus laevis (African clawed frog), this protein is Zinc finger protein 143 (znf143).